Reading from the N-terminus, the 362-residue chain is Phosphoserine aminotransferase (362 aa).

Ser9 and Arg42 together coordinate L-glutamate. Pyridoxal 5'-phosphate contacts are provided by residues Gly76 to Arg77, Trp102, Thr153, Asp174, and Gln197. Lys198 bears the N6-(pyridoxal phosphate)lysine mark. Position 239 to 240 (Asn239 to Thr240) interacts with pyridoxal 5'-phosphate.

This sequence belongs to the class-V pyridoxal-phosphate-dependent aminotransferase family. SerC subfamily. As to quaternary structure, homodimer. Pyridoxal 5'-phosphate serves as cofactor.

It localises to the cytoplasm. The catalysed reaction is O-phospho-L-serine + 2-oxoglutarate = 3-phosphooxypyruvate + L-glutamate. It carries out the reaction 4-(phosphooxy)-L-threonine + 2-oxoglutarate = (R)-3-hydroxy-2-oxo-4-phosphooxybutanoate + L-glutamate. The protein operates within amino-acid biosynthesis; L-serine biosynthesis; L-serine from 3-phospho-D-glycerate: step 2/3. Its pathway is cofactor biosynthesis; pyridoxine 5'-phosphate biosynthesis; pyridoxine 5'-phosphate from D-erythrose 4-phosphate: step 3/5. Functionally, catalyzes the reversible conversion of 3-phosphohydroxypyruvate to phosphoserine and of 3-hydroxy-2-oxo-4-phosphonooxybutanoate to phosphohydroxythreonine. This is Phosphoserine aminotransferase from Escherichia coli O1:K1 / APEC.